We begin with the raw amino-acid sequence, 437 residues long: F-box protein At3g62430 (437 aa).

Residues 1 to 49 (MDRISNLPDGVIYRVISLLSTKEATCLKYTSKNWLNLVTIIPIAVFVDS) enclose the F-box domain.

This chain is F-box protein At3g62430, found in Arabidopsis thaliana (Mouse-ear cress).